We begin with the raw amino-acid sequence, 187 residues long: Rusticyanin (187 aa).

The first 32 residues, M1 to A32, serve as a signal peptide directing secretion. Positions S85–K187 constitute a Plastocyanin-like domain. Cu cation is bound by residues H117, C170, H175, and M180.

As to quaternary structure, monomer. The cofactor is Cu cation.

It localises to the periplasm. Electron carrier from cytochrome c552 to the A-type oxidase. The protein is Rusticyanin (rus) of Acidithiobacillus ferrooxidans (strain ATCC 23270 / DSM 14882 / CIP 104768 / NCIMB 8455) (Ferrobacillus ferrooxidans (strain ATCC 23270)).